A 473-amino-acid chain; its full sequence is Photosystem II CP43 reaction center protein (473 aa).

Positions 1-14 (MKTLYSLRRFYPVE) are excised as a propeptide. Thr15 is modified (N-acetylthreonine). Position 15 is a phosphothreonine (Thr15). Transmembrane regions (helical) follow at residues 69 to 93 (LFEV…PHLA), 134 to 155 (LLGP…KDRN), 178 to 200 (KALY…RKIT), 255 to 275 (KPFA…LSYS), and 291 to 312 (WFNN…ASQA). Glu367 lines the [CaMn4O5] cluster pocket. The helical transmembrane segment at 447-471 (RARAAAAGFEKGIDRDFEPVLSMTP) threads the bilayer.

It belongs to the PsbB/PsbC family. PsbC subfamily. As to quaternary structure, PSII is composed of 1 copy each of membrane proteins PsbA, PsbB, PsbC, PsbD, PsbE, PsbF, PsbH, PsbI, PsbJ, PsbK, PsbL, PsbM, PsbT, PsbX, PsbY, PsbZ, Psb30/Ycf12, at least 3 peripheral proteins of the oxygen-evolving complex and a large number of cofactors. It forms dimeric complexes. Requires Binds multiple chlorophylls and provides some of the ligands for the Ca-4Mn-5O cluster of the oxygen-evolving complex. It may also provide a ligand for a Cl- that is required for oxygen evolution. PSII binds additional chlorophylls, carotenoids and specific lipids. as cofactor.

It localises to the plastid. The protein localises to the chloroplast thylakoid membrane. Its function is as follows. One of the components of the core complex of photosystem II (PSII). It binds chlorophyll and helps catalyze the primary light-induced photochemical processes of PSII. PSII is a light-driven water:plastoquinone oxidoreductase, using light energy to abstract electrons from H(2)O, generating O(2) and a proton gradient subsequently used for ATP formation. The protein is Photosystem II CP43 reaction center protein of Liriodendron tulipifera (Tuliptree).